The chain runs to 730 residues: Patatin-like phospholipase domain-containing protein CIMG_04897 (730 aa).

Residues 1–11 (MTANSSRRRLQ) are compositionally biased toward basic residues. The tract at residues 1–26 (MTANSSRRRLQMKSPRTDGDEKEEDY) is disordered. The helical transmembrane segment at 97–117 (WPFLLFVLSWIVFLGALYILT) threads the bilayer. The region spanning 281–472 (LCLSGGATLA…RTDIPLKALD (192 aa)) is the PNPLA domain. Residues 312–316 (GTSGG) carry the GXSXG motif. Catalysis depends on Ser-314, which acts as the Nucleophile. Residue Asp-459 is the Proton acceptor of the active site. Residues 667–730 (GHFREAPTSH…QGQSSGTKIG (64 aa)) are disordered. Over residues 721 to 730 (QGQSSGTKIG) the composition is skewed to polar residues.

Belongs to the PLPL family.

Its subcellular location is the membrane. Functionally, probable lipid hydrolase. This Coccidioides immitis (strain RS) (Valley fever fungus) protein is Patatin-like phospholipase domain-containing protein CIMG_04897.